Reading from the N-terminus, the 411-residue chain is Argininosuccinate synthase (411 aa).

ATP is bound by residues 13–21 (AYSGGLDTS) and A40. Residues Y91 and S96 each contribute to the L-citrulline site. G121 provides a ligand contact to ATP. T123, N127, and D128 together coordinate L-aspartate. L-citrulline is bound at residue N127. L-citrulline-binding residues include R131, S182, S191, E267, and Y279.

Belongs to the argininosuccinate synthase family. Type 1 subfamily. As to quaternary structure, homotetramer.

It is found in the cytoplasm. The enzyme catalyses L-citrulline + L-aspartate + ATP = 2-(N(omega)-L-arginino)succinate + AMP + diphosphate + H(+). It participates in amino-acid biosynthesis; L-arginine biosynthesis; L-arginine from L-ornithine and carbamoyl phosphate: step 2/3. The polypeptide is Argininosuccinate synthase (Bartonella tribocorum (strain CIP 105476 / IBS 506)).